A 654-amino-acid polypeptide reads, in one-letter code: Chaperone protein HtpG (654 aa).

The a; substrate-binding stretch occupies residues 1-344 (MTVENAPQRE…SDDLPLNVSR (344 aa)). The interval 345–556 (ELLQDSQVVR…EGGSPAYLER (212 aa)) is b. The tract at residues 557–654 (LLQQRGRGAG…AQTPASATAS (98 aa)) is c.

Belongs to the heat shock protein 90 family. In terms of assembly, homodimer.

The protein localises to the cytoplasm. Its function is as follows. Molecular chaperone. Has ATPase activity. In Myxococcus xanthus (strain DK1622), this protein is Chaperone protein HtpG.